The sequence spans 174 residues: MYPKAYIDYLVEFHATRDYFECHEILEEYWKEDPPKKRKRYWVGFIQLAVALYHHRRQNTAGAKRLMANSIRILQAEHRAVEDLGLDHGRLLELMQSVYEQIETVSAYKSIILPIKDEKLEEACRIECRKKKYTWGQPSALSNIFLIDKHRLRDRTDVIREREKEIERRKKSRD.

This is an uncharacterized protein from Bacillus subtilis (strain 168).